A 78-amino-acid polypeptide reads, in one-letter code: Large ribosomal subunit protein bL28 (78 aa).

This sequence belongs to the bacterial ribosomal protein bL28 family.

This is Large ribosomal subunit protein bL28 from Pectobacterium atrosepticum (strain SCRI 1043 / ATCC BAA-672) (Erwinia carotovora subsp. atroseptica).